The sequence spans 94 residues: Putative pterin-4-alpha-carbinolamine dehydratase (94 aa).

It belongs to the pterin-4-alpha-carbinolamine dehydratase family.

It catalyses the reaction (4aS,6R)-4a-hydroxy-L-erythro-5,6,7,8-tetrahydrobiopterin = (6R)-L-erythro-6,7-dihydrobiopterin + H2O. This Mycobacterium tuberculosis (strain ATCC 25177 / H37Ra) protein is Putative pterin-4-alpha-carbinolamine dehydratase.